The sequence spans 357 residues: MRKIIHVDMDAFYASVEQRDNPELRGRPVAVGSAAARGVVAAASYEAREFGVRSAMPSVTAARRCPDLIFVPPRFDVYKAVSQQIRAIFAEYTRLIEPLSLDEAYLDVTENLKGMEIATEIASEIRERIKQITGLNASAGISYNKFLAKMASDLNKPNGQAVITPKNGPAFVEQLAVKKFHGVGPATAEKMHRFGIETGADLKSKSLQFLAEHFGKSGAYFYGIARGIDERQVRPDRIRKSVGAEDTFSVDINDLDLATAELRPLAEKVWHHCEAQRVSGKTVTVKVKYSDFTQATRSRTSALPVNGIQEILEAASALLATVYPFRRSVRLLGVTLSSLTNDQEAEDEEQPQLDLAL.

The UmuC domain maps to Ile4 to Gly184. Mg(2+)-binding residues include Asp8 and Asp102. Glu103 is a catalytic residue.

Belongs to the DNA polymerase type-Y family. In terms of assembly, monomer. Requires Mg(2+) as cofactor.

It is found in the cytoplasm. It carries out the reaction DNA(n) + a 2'-deoxyribonucleoside 5'-triphosphate = DNA(n+1) + diphosphate. In terms of biological role, poorly processive, error-prone DNA polymerase involved in untargeted mutagenesis. Copies undamaged DNA at stalled replication forks, which arise in vivo from mismatched or misaligned primer ends. These misaligned primers can be extended by PolIV. Exhibits no 3'-5' exonuclease (proofreading) activity. May be involved in translesional synthesis, in conjunction with the beta clamp from PolIII. The chain is DNA polymerase IV 2 (dinB2) from Agrobacterium fabrum (strain C58 / ATCC 33970) (Agrobacterium tumefaciens (strain C58)).